The sequence spans 913 residues: Vacuolar membrane protease (913 aa).

The Cytoplasmic portion of the chain corresponds to 1–15 (MMANYFRSTFKFRKT). A helical transmembrane segment spans residues 16 to 36 (TVSTLFVLTVLVISILTWFDA). Residues 37 to 364 (NKYKSNLPDD…FFVVSARQLY (328 aa)) are Vacuolar-facing. An N-linked (GlcNAc...) asparagine glycan is attached at Asn-117. Zn(2+)-binding residues include His-152 and Asp-164. The active-site Proton acceptor is Glu-196. Residues Glu-197, Glu-222, and His-296 each coordinate Zn(2+). Residues 365–385 (VWNIVLLCVLPITLILLRIVC) form a helical membrane-spanning segment. Over 386–394 (NKLGTWRMP) the chain is Cytoplasmic. Residues 395–415 (TSALFTRIPFALFVSSFTIYF) form a helical membrane-spanning segment. Residues 416–431 (TKELLLQLNPTIWSRN) lie on the Vacuolar side of the membrane. Residues 432–452 (FILPFLFCISEFLLINTLVLA) form a helical membrane-spanning segment. Residues 453 to 465 (LFEYLWPIQDFKT) lie on the Cytoplasmic side of the membrane. A helical transmembrane segment spans residues 466-486 (LSLLELSAIAWLFLLKCTWDL). Topologically, residues 487–494 (SSSGFKAT) are vacuolar. Residues 495–515 (GVYPVTVFYLFISLASMFGLC) form a helical membrane-spanning segment. The Cytoplasmic portion of the chain corresponds to 516–600 (SMCFGKRPNA…TLNYDWSAQY (85 aa)). Basic and acidic residues predominate over residues 540–552 (NDTHSIECPRQPE). The interval 540-578 (NDTHSIECPRQPEDSETTETSPLINTPSSSVQSSPIASS) is disordered. Over residues 557-566 (TETSPLINTP) the composition is skewed to polar residues. A compositionally biased stretch (low complexity) spans 567 to 578 (SSSVQSSPIASS). Residues 601–621 (LLAVPINAFLIWESLFNLFDA) form a helical membrane-spanning segment. The Vacuolar portion of the chain corresponds to 622–634 (LSMTVQESNKATE). A helical transmembrane segment spans residues 635 to 655 (AVFKFAIYGAIFLCSPLLPFT). The Cytoplasmic portion of the chain corresponds to 656 to 660 (TKLNR). A helical membrane pass occupies residues 661 to 681 (FVVIILGVVTILAASFSLFAA). Residues 682 to 913 (PYTELAPLKL…MVTIHKYLEL (232 aa)) are Vacuolar-facing. 3 N-linked (GlcNAc...) asparagine glycosylation sites follow: Asn-729, Asn-794, and Asn-810.

It belongs to the peptidase M28 family. Zn(2+) is required as a cofactor.

The protein resides in the vacuole membrane. Its function is as follows. May be involved in vacuolar sorting and osmoregulation. This chain is Vacuolar membrane protease, found in Kluyveromyces lactis (strain ATCC 8585 / CBS 2359 / DSM 70799 / NBRC 1267 / NRRL Y-1140 / WM37) (Yeast).